The primary structure comprises 134 residues: Histone H2A.Z (134 aa).

Positions 1–31 (MSGKAHGGKGKSGAKDSGSLRSQSSSARAGL) are disordered. Serine 2 bears the N-acetylserine mark. N6-acetyllysine is present on residues lysine 4, lysine 9, lysine 11, and lysine 15. The segment covering 15–31 (KDSGSLRSQSSSARAGL) has biased composition (low complexity). The interval 98-108 (GDDELDSLIRA) is interaction with VPS72.

It belongs to the histone H2A family. As to quaternary structure, the nucleosome is a histone octamer containing two molecules each of H2A, H2B, H3 and H4 assembled in one H3-H4 heterotetramer and two H2A-H2B heterodimers. The octamer wraps approximately 147 bp of DNA. H2A or its variant H2A.Z forms a heterodimer with H2B. H2A.Z associates with the VPS72/SWC2 subunit of the SWR1 chromatin remodeling complex. Also interacts with RBP1/DNA-directed RNA polymerase II largest subunit. Interacts with NAP1. Interacts with MPS3. Acetylated by ESA1, a component of the NuA4 histone acetyltransferase (HAT) complex, and/or by GCN5, a component of the SAGA complex, to form H2A.ZK3Ac, H2A.ZK8Ac, H2A.ZK10Ac and H2A.ZK14Ac once deposited into chromatin. Acetylation is required for function at telomeres. H2A.ZK14Ac is acetylated at the promoters of active genes.

Its subcellular location is the nucleus. The protein resides in the chromosome. In terms of biological role, variant histone H2A which can replace H2A in some nucleosomes. Nucleosomes wrap and compact DNA into chromatin, limiting DNA accessibility to the cellular machineries which require DNA as a template. Histones thereby play a central role in transcription regulation, DNA repair, DNA replication and chromosomal stability. DNA accessibility is regulated via a complex set of post-translational modifications of histones, also called histone code, and nucleosome remodeling. This variant is enriched at promoters, it may keep them in a repressed state until the appropriate activation signal is received. Near telomeres, it may counteract gene silencing caused by the spread of heterochromatin proteins. Required for the RNA polymerase II and SPT15/TBP recruitment to the target genes. Involved in chromosome stability. Required to target MPS3 to the inner membrane of the nuclear envelope. In Saccharomyces cerevisiae (strain ATCC 204508 / S288c) (Baker's yeast), this protein is Histone H2A.Z.